Here is a 500-residue protein sequence, read N- to C-terminus: NAD(P)H-quinone oxidoreductase chain 4, chloroplastic (500 aa).

Helical transmembrane passes span 3–23, 37–57, 84–104, 111–129, 134–154, 167–187, 208–228, 242–262, 272–292, 305–325, 330–350, 386–406, 416–436, and 462–482; these read FFPW…VIFF, ICIC…HFQF, GLSI…TLAA, SRLF…IGSF, LLLF…LLSI, FILY…GVGL, ALEI…SPII, HYST…YGLI, AHSI…IYAA, IAYS…SITD, GAIL…FLAG, LALP…GIIT, ILIT…SLSM, and LFVS…PDFV.

This sequence belongs to the complex I subunit 4 family.

Its subcellular location is the plastid. The protein resides in the chloroplast thylakoid membrane. It carries out the reaction a plastoquinone + NADH + (n+1) H(+)(in) = a plastoquinol + NAD(+) + n H(+)(out). The catalysed reaction is a plastoquinone + NADPH + (n+1) H(+)(in) = a plastoquinol + NADP(+) + n H(+)(out). This is NAD(P)H-quinone oxidoreductase chain 4, chloroplastic from Panax ginseng (Korean ginseng).